We begin with the raw amino-acid sequence, 284 residues long: Xyloglucan endotransglucosylase/hydrolase protein 22 (284 aa).

Residues 1 to 21 (MAITYLLPLFLSLIITSSVSA) form the signal peptide. In terms of domain architecture, GH16 spans 22–211 (NFQRDVEITW…WSKAPFTASY (190 aa)). Glu-97 functions as the Nucleophile in the catalytic mechanism. The Proton donor role is filled by Glu-101. Glu-101 contributes to the xyloglucan binding site. A glycan (N-linked (GlcNAc...) asparagine) is linked at Asn-105. Xyloglucan contacts are provided by residues 114-116 (HTN), 124-126 (DKE), 190-191 (DW), and Gly-195. Cys-219 and Cys-228 are oxidised to a cystine. Asn-230 is a glycosylation site (N-linked (GlcNAc...) asparagine). Residues Cys-267 and Cys-281 are joined by a disulfide bond. Arg-272 is a binding site for xyloglucan.

It belongs to the glycosyl hydrolase 16 family. XTH group 2 subfamily. Contains at least one intrachain disulfide bond essential for its enzymatic activity. Post-translationally, N-glycosylated; essential for its enzymatic activity. As to expression, highly expressed. Predominantly expressed in green siliques. Expressed in young expanding leaves, trichomes, lateral root primordia, vascular tissue, abscission zones and elongating hypocols. Following wind stimulation, it decreases in the leaves of wind-stimulated plants, while it strongly increases in sites around cells of the pith parenchyma, between the vascular elements, and within the epidermis.

It localises to the secreted. The protein localises to the cell wall. Its subcellular location is the extracellular space. It is found in the apoplast. It carries out the reaction breaks a beta-(1-&gt;4) bond in the backbone of a xyloglucan and transfers the xyloglucanyl segment on to O-4 of the non-reducing terminal glucose residue of an acceptor, which can be a xyloglucan or an oligosaccharide of xyloglucan.. Functionally, catalyzes xyloglucan endohydrolysis (XEH) and/or endotransglycosylation (XET). Cleaves and religates xyloglucan polymers, an essential constituent of the primary cell wall, and thereby participates in cell wall construction of growing tissues. Its induction in case of mechanical stress, suggests that it may contribute in the adaptive changes in morphogenesis by being recruited to alter tissues tensil strength, or flexibility, enabling adaptation to mechanically stressful environments. This chain is Xyloglucan endotransglucosylase/hydrolase protein 22 (XTH22), found in Arabidopsis thaliana (Mouse-ear cress).